The following is a 633-amino-acid chain: ATP-dependent clpX-like chaperone, mitochondrial (633 aa).

A mitochondrion-targeting transit peptide spans 1-56; that stretch reads MSSCGACTCGAAAARLLTTSLTSAQRGISCGRIHVPVLGRLGTLDTQILRRAPLRT. Positions 65–101 are disordered; the sequence is ASKDGTNKDGSGDGNKKSVTEGSSKKSGSGNSGKGGN. A compositionally biased stretch (basic and acidic residues) spans 69-83; sequence GTNKDGSGDGNKKSV. The span at 84 to 93 shows a compositional bias: low complexity; the sequence is TEGSSKKSGS. Positions 93-146 constitute a ClpX-type ZB domain; that stretch reads SGNSGKGGNQLRCPKCGDLCTHVETFVSSTRFVKCEKCHHFFVVLSEADSKKSI. The Zn(2+) site is built by Cys-105, Cys-108, Cys-127, and Cys-130. ATP is bound at residue 294–301; it reads PTGSGKTL. Lys-437 carries the N6-acetyllysine modification. Positions 598 to 610 are enriched in basic and acidic residues; the sequence is KEPGYIRAPSKES. The tract at residues 598–633 is disordered; sequence KEPGYIRAPSKESSEEDYDSGVEEDGWPRQADAANS. Acidic residues predominate over residues 611-622; that stretch reads SEEDYDSGVEED. Ser-617 is modified (phosphoserine).

The protein belongs to the ClpX chaperone family. In terms of assembly, homohexamer that forms a ring structure; this hexamerization requires ATP binding. Component of the ClpXP complex formed by the assembly of two CLPP heptameric rings with two CLPX hexameric rings, giving rise to a symmetrical structure with two central CLPP rings flanked by a CLPX ring at either end of the complex. Interacts with TFAM.

The protein localises to the mitochondrion. Its subcellular location is the mitochondrion matrix. The protein resides in the mitochondrion nucleoid. It carries out the reaction ATP + H2O = ADP + phosphate + H(+). ATP-dependent chaperone that functions as an unfoldase. As part of the ClpXP protease complex, it recognizes specific protein substrates, unfolds them using energy derived from ATP hydrolysis, and then translocates them to the proteolytic subunit (CLPP) of the ClpXP complex for degradation. Thanks to its chaperone activity, it also functions in the incorporation of the pyridoxal phosphate cofactor into 5-aminolevulinate synthase, thereby activating 5-aminolevulinate (ALA) synthesis, the first step in heme biosynthesis. This chaperone is also involved in the control of mtDNA nucleoid distribution, by regulating mitochondrial transcription factor A (TFAM) activity. This is ATP-dependent clpX-like chaperone, mitochondrial from Rattus norvegicus (Rat).